The sequence spans 78 residues: Small ribosomal subunit protein bS20 (78 aa).

It belongs to the bacterial ribosomal protein bS20 family.

Binds directly to 16S ribosomal RNA. This Streptococcus sanguinis (strain SK36) protein is Small ribosomal subunit protein bS20.